Reading from the N-terminus, the 646-residue chain is Translation initiation factor IF-2 (646 aa).

The 170-residue stretch at 146–315 folds into the tr-type G domain; sequence PRPPVVTVMG…LLVAEMEELR (170 aa). Residues 155–162 form a G1 region; that stretch reads GHVDHGKT. 155-162 contacts GTP; the sequence is GHVDHGKT. A G2 region spans residues 180 to 184; sequence GITQH. Positions 201–204 are G3; the sequence is DTPG. GTP-binding positions include 201-205 and 255-258; these read DTPGH and NKID. Residues 255 to 258 form a G4 region; that stretch reads NKID. The segment at 291–293 is G5; the sequence is SAK.

The protein belongs to the TRAFAC class translation factor GTPase superfamily. Classic translation factor GTPase family. IF-2 subfamily.

Its subcellular location is the cytoplasm. In terms of biological role, one of the essential components for the initiation of protein synthesis. Protects formylmethionyl-tRNA from spontaneous hydrolysis and promotes its binding to the 30S ribosomal subunits. Also involved in the hydrolysis of GTP during the formation of the 70S ribosomal complex. The polypeptide is Translation initiation factor IF-2 (Clostridioides difficile (strain 630) (Peptoclostridium difficile)).